The primary structure comprises 334 residues: Porphobilinogen deaminase (334 aa).

Residue Cys-255 is modified to S-(dipyrrolylmethanemethyl)cysteine.

It belongs to the HMBS family. As to quaternary structure, monomer. Dipyrromethane is required as a cofactor.

It carries out the reaction 4 porphobilinogen + H2O = hydroxymethylbilane + 4 NH4(+). It participates in porphyrin-containing compound metabolism; protoporphyrin-IX biosynthesis; coproporphyrinogen-III from 5-aminolevulinate: step 2/4. Tetrapolymerization of the monopyrrole PBG into the hydroxymethylbilane pre-uroporphyrinogen in several discrete steps. In Burkholderia orbicola (strain MC0-3), this protein is Porphobilinogen deaminase.